We begin with the raw amino-acid sequence, 220 residues long: Pyrrolidone-carboxylate peptidase 1 (220 aa).

Active-site residues include E80, C143, and H172.

It belongs to the peptidase C15 family. As to quaternary structure, homotetramer.

Its subcellular location is the cytoplasm. It carries out the reaction Release of an N-terminal pyroglutamyl group from a polypeptide, the second amino acid generally not being Pro.. Removes 5-oxoproline from various penultimate amino acid residues except L-proline. The polypeptide is Pyrrolidone-carboxylate peptidase 1 (Photorhabdus laumondii subsp. laumondii (strain DSM 15139 / CIP 105565 / TT01) (Photorhabdus luminescens subsp. laumondii)).